The primary structure comprises 119 residues: Large ribosomal subunit protein uL18 (119 aa).

It belongs to the universal ribosomal protein uL18 family. In terms of assembly, part of the 50S ribosomal subunit; part of the 5S rRNA/L5/L18/L25 subcomplex. Contacts the 5S and 23S rRNAs.

This is one of the proteins that bind and probably mediate the attachment of the 5S RNA into the large ribosomal subunit, where it forms part of the central protuberance. The protein is Large ribosomal subunit protein uL18 of Chlorobium luteolum (strain DSM 273 / BCRC 81028 / 2530) (Pelodictyon luteolum).